The chain runs to 164 residues: Nitric oxide synthase, inducible (164 aa).

Phenylalanine 3 contacts (6R)-L-erythro-5,6,7,8-tetrahydrobiopterin. A heme b-binding site is contributed by tyrosine 18. The tract at residues 42-62 (FKGLIRAVLFSQTLIKSALAK) is calmodulin-binding. In terms of domain architecture, Flavodoxin-like spans 66–164 (CTVLYATETG…SRMYPHFCAF (99 aa)). Residues threonine 72, glutamate 73, threonine 74, lysine 76, serine 77, serine 118, threonine 119, serine 155, and cysteine 162 each contribute to the FMN site.

The protein belongs to the NOS family. In terms of assembly, homodimer. The cofactor is heme b. FAD serves as cofactor. It depends on FMN as a cofactor. Requires (6R)-L-erythro-5,6,7,8-tetrahydrobiopterin as cofactor.

It localises to the cytoplasm. The protein resides in the cytosol. The catalysed reaction is 2 L-arginine + 3 NADPH + 4 O2 + H(+) = 2 L-citrulline + 2 nitric oxide + 3 NADP(+) + 4 H2O. Not stimulated by calcium/calmodulin. In terms of biological role, produces nitric oxide (NO) which is a messenger molecule with diverse functions throughout the body. In macrophages, NO mediates tumoricidal and bactericidal actions. Also has nitrosylase activity and mediates cysteine S-nitrosylation of cytoplasmic target proteins such COX2. This Carassius auratus (Goldfish) protein is Nitric oxide synthase, inducible (nos2).